The chain runs to 965 residues: 26S proteasome regulatory subunit rpn2 (965 aa).

PC repeat units lie at residues 385-418 (TATA…PSSS), 424-457 (GAFY…EIVQ), 459-493 (GLLL…VAGS), 494-528 (AAGI…EKII), 530-563 (GLGI…TLRY), 564-599 (AGMF…DVRR), 600-632 (AAVC…PHVR), 634-668 (GSAI…FVRQ), 669-699 (GAMI…FEQV), and 712-744 (GATL…SAIV). 2 disordered regions span residues 826 to 883 (AKRA…KSET) and 934 to 965 (NRDA…DDDD). Composition is skewed to basic and acidic residues over residues 827-856 (KRAE…KEAT) and 874-883 (SKKEEPKSET). A compositionally biased stretch (acidic residues) spans 945-965 (EPGEQEASPPEDFEYPFDDDD). Position 952 is a phosphoserine (serine 952).

The protein belongs to the proteasome subunit S1 family.

Functionally, acts as a regulatory subunit of the 26S proteasome which is involved in the ATP-dependent degradation of ubiquitinated proteins. This chain is 26S proteasome regulatory subunit rpn2 (rpn2), found in Schizosaccharomyces pombe (strain 972 / ATCC 24843) (Fission yeast).